Reading from the N-terminus, the 771-residue chain is Heat shock transcription factor (771 aa).

The tract at residues 1 to 70 is disordered; sequence MTTNLYAIAG…GIGISKPGLS (70 aa). 2 stretches are compositionally biased toward low complexity: residues 11 to 23 and 31 to 42; these read PSKP…TPSP and LKSLTSLPTNPL. The span at 43–62 shows a compositional bias: polar residues; the sequence is NPQGTSTSNALTNQSSSTGI. Residues 78–168 mediate DNA binding; that stretch reads MKVPAFLNKL…PIELWEFANP (91 aa). Positions 183 to 266 are disordered; that stretch reads RKNNRLSNSG…PPSHTSAGPL (84 aa). Low complexity-rich tracts occupy residues 189–199 and 212–233; these read SNSGVGSSSSL and SASA…ISQG. The span at 238 to 262 shows a compositional bias: polar residues; the sequence is NHSTSGKYLITDGTTPGSAPPSHTS. The involved in trimerization stretch occupies residues 280–333; the sequence is GIAAIRQTQASIATDLRKLQASNEALWRQAYETQEKQRKHEETIDLIVSFLERL. Composition is skewed to basic and acidic residues over residues 350–372 and 399–415; these read RGVG…ARFA and TGEH…DRLV. 3 disordered regions span residues 350 to 513, 590 to 634, and 708 to 771; these read RGVG…SSNA, QALT…GSGT, and SGVG…SGLK. A compositionally biased stretch (polar residues) spans 418–448; it reads GSNSEYSIPSVKRTSSSSHPLSLGQLGSSRF. Composition is skewed to low complexity over residues 497 to 511 and 599 to 620; these read LSPL…PSSS and HNPS…SASA.

Belongs to the HSF family. As to quaternary structure, homotrimer. Homotrimerization increases the affinity of HSF1 to DNA. Interacts with transcriptional coregulator SSA1 on chromatin. Post-translationally, phosphorylated at high temperature.

The protein localises to the nucleus. Functionally, DNA-binding transcription factor that specifically binds heat shock promoter elements (HSE) and activates transcription. Promotes thermotolerance by transiently regulating a subset of genes. Induces expression of STI, SSA1, SSA2, HSP78 and KAR2 during the heat response. The chain is Heat shock transcription factor from Cryptococcus neoformans var. grubii serotype A (strain H99 / ATCC 208821 / CBS 10515 / FGSC 9487) (Filobasidiella neoformans var. grubii).